The chain runs to 232 residues: Glutathione-specific gamma-glutamylcyclotransferase (232 aa).

10 to 15 (VLGYGS) contacts substrate. Residue glutamate 115 is the Proton acceptor of the active site.

It belongs to the gamma-glutamylcyclotransferase family. ChaC subfamily.

It is found in the cytoplasm. The protein resides in the nucleus. The enzyme catalyses glutathione = L-cysteinylglycine + 5-oxo-L-proline. Its function is as follows. Catalyzes the cleavage of glutathione into 5-oxo-L-proline and a Cys-Gly dipeptide. Acts specifically on glutathione, but not on other gamma-glutamyl peptides. Allows utilization of gluthathione through subsequent cleavage of the Cys-Gly dipeptide by Cys-Gly metallodipeptidase DUG1. In Saccharomyces cerevisiae (strain ATCC 204508 / S288c) (Baker's yeast), this protein is Glutathione-specific gamma-glutamylcyclotransferase.